The sequence spans 327 residues: GTP 3',8-cyclase (327 aa).

Residues 8–232 (AFARKFYYLR…LQRSRSDGPA (225 aa)) enclose the Radical SAM core domain. A GTP-binding site is contributed by R17. C24 and C28 together coordinate [4Fe-4S] cluster. S-adenosyl-L-methionine is bound at residue Y30. C31 lines the [4Fe-4S] cluster pocket. Residue R66 participates in GTP binding. G70 contacts S-adenosyl-L-methionine. Residue T97 participates in GTP binding. S121 lines the S-adenosyl-L-methionine pocket. Residue K158 participates in GTP binding. Residue M192 participates in S-adenosyl-L-methionine binding. The [4Fe-4S] cluster site is built by C255 and C258. 260-262 (RLR) contacts GTP. C272 lines the [4Fe-4S] cluster pocket.

This sequence belongs to the radical SAM superfamily. MoaA family. In terms of assembly, monomer and homodimer. It depends on [4Fe-4S] cluster as a cofactor.

The enzyme catalyses GTP + AH2 + S-adenosyl-L-methionine = (8S)-3',8-cyclo-7,8-dihydroguanosine 5'-triphosphate + 5'-deoxyadenosine + L-methionine + A + H(+). It functions in the pathway cofactor biosynthesis; molybdopterin biosynthesis. Its function is as follows. Catalyzes the cyclization of GTP to (8S)-3',8-cyclo-7,8-dihydroguanosine 5'-triphosphate. This Photorhabdus laumondii subsp. laumondii (strain DSM 15139 / CIP 105565 / TT01) (Photorhabdus luminescens subsp. laumondii) protein is GTP 3',8-cyclase.